The chain runs to 464 residues: F-box/FBD/LRR-repeat protein At1g80470 (464 aa).

In terms of domain architecture, F-box spans 15–62; sequence DWISGLADDLLLQILSKVPTRESVFTSRMSKRWRNLWRHVPALDLDSS. 6 LRR repeats span residues 96–122, 123–150, 152–178, 197–222, 223–249, and 273–298; these read EEHC…TILS, KVNI…TLYS, VFDA…KFDG, IITH…KLES, MRED…SITD, and DAED…TISA. Residues 359–413 enclose the FBD domain; it reads KEEINLSLVPHCFESSLEYVQLKVPITVSETSSKMELAIYFVRNCSVLKKLMLNE.

This chain is F-box/FBD/LRR-repeat protein At1g80470, found in Arabidopsis thaliana (Mouse-ear cress).